Reading from the N-terminus, the 597-residue chain is Nuclear factor erythroid 2-related factor 2 (597 aa).

Residues 29–31 (DLG) carry the DLG motif motif. At Ser-40 the chain carries Phosphoserine; by PKC. The ETGE motif signature appears at 79–82 (ETGE). Ser-207 carries the post-translational modification Phosphoserine. Residues 327–440 (TMEFNDSDSG…APFTKDKHSS (114 aa)) are disordered. Residues 333–345 (SDSGISLNTSPSR) are compositionally biased toward polar residues. 3 N-linked (Glc) (glycation) lysine glycosylation sites follow: Lys-454, Lys-464, and Lys-479. In terms of domain architecture, bZIP spans 489–552 (LIRDIRRRGK…HLLKRRLSTL (64 aa)). Arg-491 carries N-linked (Glc) (glycation) arginine glycosylation. A basic motif region spans residues 491 to 510 (RDIRRRGKNKVAAQNCRKRK). Residues 514-521 (IVELEQDL) form a leucine-zipper region. Arg-561 carries N-linked (Glc) (glycation) arginine glycosylation. A disordered region spans residues 563–597 (EDGKPYSPSEYSLQQTRDGNVFLVPKSKKPDTKKN). Lys-566 carries an N-linked (Glc) (glycation) lysine glycan. Over residues 571–580 (SEYSLQQTRD) the composition is skewed to polar residues. The mediates interaction with CHD6 and is necessary to activate transcription stretch occupies residues 583–588 (VFLVPK). An N6-acetyllysine; by CREBBP mark is found at Lys-588 and Lys-591.

The protein belongs to the bZIP family. CNC subfamily. Heterodimer; heterodimerizes with small Maf proteins. Interacts (via the bZIP domain) with MAFG and MAFK; required for binding to antioxidant response elements (AREs) on DNA. Interacts with KEAP1; the interaction is direct and promotes ubiquitination by the BCR(KEAP1) E3 ubiquitin ligase complex. Forms a ternary complex with PGAM5 and KEAP1. Interacts with EEF1D at heat shock promoter elements (HSE). Interacts via its leucine-zipper domain with the coiled-coil domain of PMF1. Interacts with CHD6; involved in activation of the transcription. Interacts with ESRRB; represses NFE2L2 transcriptional activity. Interacts with MOTS-c, a peptide produced by the mitochondrially encoded 12S rRNA MT-RNR1; the interaction occurs in the nucleus following metabolic stress. Ubiquitinated in the cytoplasm by the BCR(KEAP1) E3 ubiquitin ligase complex leading to its degradation. In response to oxidative stress, electrophile metabolites, such as sulforaphane, modify KEAP1, leading to inhibit activity of the BCR(KEAP1) complex, promoting NFE2L2/NRF2 nuclear accumulation and activity. In response to autophagy, the BCR(KEAP1) complex is inactivated. Post-translationally, phosphorylated by EIF2AK3/PERK following unfolded protein response (UPR), promoting dissociation from its cytoplasmic inhibitor KEAP1, followed by its translocation into the nucleus. Phosphorylation of Ser-40 by PKC in response to oxidative stress dissociates NFE2L2 from its cytoplasmic inhibitor KEAP1, promoting its translocation into the nucleus. In terms of processing, acetylation at Lys-588 and Lys-591 increases nuclear localization whereas deacetylation by SIRT1 enhances cytoplasmic presence. Glycation impairs transcription factor activity by preventing heterodimerization with small Maf proteins. Deglycation by FN3K restores activity. Widely expressed. Highest expression in liver, skeletal muscle, luminal cells of the stomach and intestine, lining of the bronchi and alveoli, and in renal tubules; followed by heart, spleen, testis and brain.

The protein localises to the cytoplasm. The protein resides in the cytosol. It localises to the nucleus. Its function is as follows. Transcription factor that plays a key role in the response to oxidative stress: binds to antioxidant response (ARE) elements present in the promoter region of many cytoprotective genes, such as phase 2 detoxifying enzymes, and promotes their expression, thereby neutralizing reactive electrophiles. In normal conditions, ubiquitinated and degraded in the cytoplasm by the BCR(KEAP1) complex. In response to oxidative stress, electrophile metabolites inhibit activity of the BCR(KEAP1) complex, promoting nuclear accumulation of NFE2L2/NRF2, heterodimerization with one of the small Maf proteins and binding to ARE elements of cytoprotective target genes. The NFE2L2/NRF2 pathway is also activated in response to selective autophagy: autophagy promotes interaction between KEAP1 and SQSTM1/p62 and subsequent inactivation of the BCR(KEAP1) complex, leading to NFE2L2/NRF2 nuclear accumulation and expression of cytoprotective genes. The NFE2L2/NRF2 pathway is also activated during the unfolded protein response (UPR), contributing to redox homeostasis and cell survival following endoplasmic reticulum stress. May also be involved in the transcriptional activation of genes of the beta-globin cluster by mediating enhancer activity of hypersensitive site 2 of the beta-globin locus control region. Also plays an important role in the regulation of the innate immune response. It is a critical regulator of the innate immune response and survival during sepsis by maintaining redox homeostasis and restraint of the dysregulation of pro-inflammatory signaling pathways like MyD88-dependent and -independent and TNF-alpha signaling. Suppresses macrophage inflammatory response by blocking pro-inflammatory cytokine transcription and the induction of IL6. Binds to the proximity of pro-inflammatory genes in macrophages and inhibits RNA Pol II recruitment. The inhibition is independent of the Nrf2-binding motif and reactive oxygen species level. Represses antiviral cytosolic DNA sensing by suppressing the expression of the adapter protein STING1 and decreasing responsiveness to STING1 agonists while increasing susceptibility to infection with DNA viruses. The polypeptide is Nuclear factor erythroid 2-related factor 2 (Mus musculus (Mouse)).